Consider the following 381-residue polypeptide: Homoserine O-succinyltransferase (381 aa).

The region spanning 45–360 (NAVLVCHALN…PHGHDAFLLD (316 aa)) is the AB hydrolase-1 domain. The active-site Nucleophile is Ser-151. Arg-221 serves as a coordination point for substrate. Residues Asp-321 and His-354 contribute to the active site. Residue Asp-355 participates in substrate binding.

Belongs to the AB hydrolase superfamily. MetX family. As to quaternary structure, homodimer.

Its subcellular location is the cytoplasm. The enzyme catalyses L-homoserine + succinyl-CoA = O-succinyl-L-homoserine + CoA. It functions in the pathway amino-acid biosynthesis; L-methionine biosynthesis via de novo pathway; O-succinyl-L-homoserine from L-homoserine: step 1/1. Transfers a succinyl group from succinyl-CoA to L-homoserine, forming succinyl-L-homoserine. This is Homoserine O-succinyltransferase from Burkholderia pseudomallei (strain 1710b).